We begin with the raw amino-acid sequence, 315 residues long: Mannose-6-phosphate isomerase ManA (315 aa).

The Zn(2+) site is built by histidine 97, glutamate 115, and histidine 172. The active site involves arginine 192.

It belongs to the mannose-6-phosphate isomerase type 1 family. Zn(2+) serves as cofactor.

The catalysed reaction is D-mannose 6-phosphate = D-fructose 6-phosphate. The polypeptide is Mannose-6-phosphate isomerase ManA (manA) (Bacillus subtilis (strain 168)).